We begin with the raw amino-acid sequence, 492 residues long: BTB/POZ domain and ankyrin repeat-containing protein NOOT2 (492 aa).

Residues 25-107 (SDVTFQVEGR…LYSGQVSIVP (83 aa)) form the BTB domain. The C2HC NPR-type zinc finger occupies 113-127 (RPNCGERGCWHTHCT). Cys116, Cys121, His123, and Cys126 together coordinate Zn(2+). ANK repeat units follow at residues 248-277 (QKIR…LNLD), 278-307 (EALA…DVNY), 312-341 (AGKT…DPTV), and 345-379 (DGVT…KLRL). 2 disordered regions span residues 395-439 (ENNA…NSIG) and 455-492 (TQMG…SHDF). Composition is skewed to low complexity over residues 397 to 413 (NASN…SSAA) and 425 to 439 (SSSS…NSIG). Over residues 461–473 (DDNRHNNSHREAM) the composition is skewed to basic and acidic residues.

Belongs to the plant 'ANKYRIN-BTB/POZ' family. 'NOOT-BOP-COCH-like' (NBCL) subfamily. As to quaternary structure, homodimer.

The protein resides in the nucleus. The protein localises to the cytoplasm. Its subcellular location is the cell membrane. It participates in protein modification; protein ubiquitination. Functionally, may act as a substrate-specific adapter of an E3 ubiquitin-protein ligase complex (CUL3-RBX1-BTB) which mediates the ubiquitination and subsequent proteasomal degradation of target proteins. Transcriptional co-regulator involved in the promotion of leaf and floral meristem fate and determinacy. Required for the abscission of senescent organs, probably by regulating the cell wall disorganization in abscission zones (AZs, e.g. pulvini at the base of leaves). Involved in the coordination of the symbiotic nodule developmental program; promotes the formation of root nodules by interacting directly with APP1 to modulate the expression of the nuclear transcription factor Y subunit (NF-YA1), a key nodulin. Involved in the regulation of indeterminate nodule identity in association with NOOT1. The protein is BTB/POZ domain and ankyrin repeat-containing protein NOOT2 of Medicago truncatula (Barrel medic).